Here is a 313-residue protein sequence, read N- to C-terminus: Ribosomal RNA small subunit methyltransferase H (313 aa).

S-adenosyl-L-methionine-binding positions include 36-38, Asp-56, Phe-80, Asp-102, and Gln-109; that span reads GGH.

It belongs to the methyltransferase superfamily. RsmH family.

The protein resides in the cytoplasm. The enzyme catalyses cytidine(1402) in 16S rRNA + S-adenosyl-L-methionine = N(4)-methylcytidine(1402) in 16S rRNA + S-adenosyl-L-homocysteine + H(+). Specifically methylates the N4 position of cytidine in position 1402 (C1402) of 16S rRNA. In Actinobacillus pleuropneumoniae serotype 7 (strain AP76), this protein is Ribosomal RNA small subunit methyltransferase H.